We begin with the raw amino-acid sequence, 278 residues long: Small ribosomal subunit biogenesis GTPase RsgA (278 aa).

One can recognise a CP-type G domain in the interval 62-218; it reads KNTLVRPKVV…ICDTPGFNVI (157 aa). GTP-binding positions include 112–115 and 162–170; these read TKND and GQSGVGKSS. 4 residues coordinate Zn(2+): Cys241, Cys246, His248, and Cys254.

Belongs to the TRAFAC class YlqF/YawG GTPase family. RsgA subfamily. As to quaternary structure, monomer. Associates with 30S ribosomal subunit, binds 16S rRNA. Requires Zn(2+) as cofactor.

It localises to the cytoplasm. One of several proteins that assist in the late maturation steps of the functional core of the 30S ribosomal subunit. Helps release RbfA from mature subunits. May play a role in the assembly of ribosomal proteins into the subunit. Circularly permuted GTPase that catalyzes slow GTP hydrolysis, GTPase activity is stimulated by the 30S ribosomal subunit. The sequence is that of Small ribosomal subunit biogenesis GTPase RsgA from Mycoplasma pneumoniae (strain ATCC 29342 / M129 / Subtype 1) (Mycoplasmoides pneumoniae).